The following is a 65-amino-acid chain: Ubiquinol-cytochrome-c reductase complex assembly factor 6 (65 aa).

The Mitochondrial matrix segment spans residues Met-1–Arg-9. A helical; Signal-anchor for type II membrane protein membrane pass occupies residues Tyr-10–Tyr-32. Topologically, residues Arg-33–Gln-65 are mitochondrial intermembrane.

The protein belongs to the UQCC6 family. As to expression, highly expressed in skeletal and cardiac muscle (at protein level).

It is found in the mitochondrion inner membrane. Required for the assembly and stability of the mitochondrial ubiquinol-cytochrome c reductase complex (complex III (CIII) or cytochrome b-c1 complex), a multisubunit transmembrane complex that is part of the mitochondrial electron transport chain (ETC) which drives oxidative phosphorylation. Mediates early complex III biogenesis. Participates in regulating the levels of electron transport chain proteins, and therefore energy supply, in response to changes in energy demand. Also required for cytochrome c oxidase complex (complex IV) assembly. This Danio rerio (Zebrafish) protein is Ubiquinol-cytochrome-c reductase complex assembly factor 6 (uqcc6).